The primary structure comprises 84 residues: Small ribosomal subunit protein bS20 (84 aa).

A disordered region spans residues 1 to 28 (MPNIKSAIKRVKTADTRNSRNASQRSAM).

The protein belongs to the bacterial ribosomal protein bS20 family.

In terms of biological role, binds directly to 16S ribosomal RNA. This chain is Small ribosomal subunit protein bS20, found in Listeria welshimeri serovar 6b (strain ATCC 35897 / DSM 20650 / CCUG 15529 / CIP 8149 / NCTC 11857 / SLCC 5334 / V8).